Here is a 465-residue protein sequence, read N- to C-terminus: DEAD-box ATP-dependent RNA helicase 55 (465 aa).

The Q motif signature appears at 17–45 (FSELKPPLSEDIIEALDRSGFEVCTPVQA). Residues 48–219 (IPFLCSHKDV…KAGLRNPYLK (172 aa)) enclose the Helicase ATP-binding domain. 61–68 (AATGSGKT) contacts ATP. The DEAD box motif lies at 167 to 170 (DEAD). The Helicase C-terminal domain occupies 228-422 (QLVHLLIENK…KDKLQQEKRG (195 aa)). Residues 413–465 (KDKLQQEKRGKRKKSSKEAVDDSNKASRKRKLTGRQRQTIQTAQDEEEMNLRL) are disordered. Over residues 428–437 (SKEAVDDSNK) the composition is skewed to basic and acidic residues. Residues 456–465 (QDEEEMNLRL) are compositionally biased toward acidic residues.

It belongs to the DEAD box helicase family. DDX55/SPB4 subfamily.

The enzyme catalyses ATP + H2O = ADP + phosphate + H(+). The polypeptide is DEAD-box ATP-dependent RNA helicase 55 (RH55) (Arabidopsis thaliana (Mouse-ear cress)).